Here is a 447-residue protein sequence, read N- to C-terminus: Phospholipase A(1) LCAT3 (447 aa).

The active-site Acyl-ester intermediate is the serine 177. Catalysis depends on charge relay system residues aspartate 384 and histidine 409.

This sequence belongs to the AB hydrolase superfamily. Lipase family.

It localises to the microsome membrane. It carries out the reaction a 1,2-diacyl-sn-glycero-3-phosphocholine + H2O = a 2-acyl-sn-glycero-3-phosphocholine + a fatty acid + H(+). In terms of biological role, hydrolyzes the sn-1 acylester bond of phospholipids. Phosphatidylcholine, phosphatidylethanolamine and phosphatidic acid can be used as substrates. Weak activity with lysophosphatidylcholine and no activity with tripalmitoylglycerol and cholesteryl oleate. Seems to have a preference for unsaturated fatty acids at the sn-1 position. The polypeptide is Phospholipase A(1) LCAT3 (LCAT3) (Arabidopsis thaliana (Mouse-ear cress)).